The following is a 131-amino-acid chain: D-ribose pyranase (131 aa).

His20 (proton donor) is an active-site residue. Residues Asp28, His98, and 120-122 each bind substrate; that span reads YAN.

It belongs to the RbsD / FucU family. RbsD subfamily. In terms of assembly, homodecamer.

The protein localises to the cytoplasm. The catalysed reaction is beta-D-ribopyranose = beta-D-ribofuranose. It participates in carbohydrate metabolism; D-ribose degradation; D-ribose 5-phosphate from beta-D-ribopyranose: step 1/2. Its function is as follows. Catalyzes the interconversion of beta-pyran and beta-furan forms of D-ribose. This Bacillus cereus (strain B4264) protein is D-ribose pyranase.